Here is a 79-residue protein sequence, read N- to C-terminus: Sec-independent protein translocase protein TatA (79 aa).

The chain crosses the membrane as a helical span at residues 1-21; it reads MGGWSSPSHWLIILLIVVLLF. The segment covering 52-61 has biased composition (basic and acidic residues); that stretch reads KNTQKIEENK. Residues 52-79 form a disordered region; sequence KNTQKIEENKNTTNNTSADASIDKTKKA.

It belongs to the TatA/E family. As to quaternary structure, the Tat system comprises two distinct complexes: a TatABC complex, containing multiple copies of TatA, TatB and TatC subunits, and a separate TatA complex, containing only TatA subunits. Substrates initially bind to the TatABC complex, which probably triggers association of the separate TatA complex to form the active translocon.

It localises to the cell inner membrane. Its function is as follows. Part of the twin-arginine translocation (Tat) system that transports large folded proteins containing a characteristic twin-arginine motif in their signal peptide across membranes. TatA could form the protein-conducting channel of the Tat system. This is Sec-independent protein translocase protein TatA from Campylobacter jejuni subsp. jejuni serotype O:6 (strain 81116 / NCTC 11828).